Here is a 194-residue protein sequence, read N- to C-terminus: Threonylcarbamoyl-AMP synthase (194 aa).

The YrdC-like domain maps to 11–194 (FRNLMKIINA…GINYKIIRKG (184 aa)).

This sequence belongs to the SUA5 family. TsaC subfamily.

Its subcellular location is the cytoplasm. It catalyses the reaction L-threonine + hydrogencarbonate + ATP = L-threonylcarbamoyladenylate + diphosphate + H2O. Required for the formation of a threonylcarbamoyl group on adenosine at position 37 (t(6)A37) in tRNAs that read codons beginning with adenine. Catalyzes the conversion of L-threonine, HCO(3)(-)/CO(2) and ATP to give threonylcarbamoyl-AMP (TC-AMP) as the acyladenylate intermediate, with the release of diphosphate. The polypeptide is Threonylcarbamoyl-AMP synthase (Wigglesworthia glossinidia brevipalpis).